Consider the following 761-residue polypeptide: MDQGGGILELHKDLKMPHTMIMPDFGMSGIAHLDGEHIVVSVPEAVMVSDVVTDEEGIMLETALEAEVVEEPDICQEDVITTEGVIMSESILGAEVAIQEALSGTADLIEETVPDQVFVAELMSPHIQSPLDHNLVSAEVMVTDADTVIDSHDTLQSDVTIKADDDVEDVKSTSEDYLMISLDEVGGKLDIEDTSLKISADVGQDDDGSKEDEFSSEVIKVYIFKADGDEDVEIGSTEVVEESDFPGRHTVMESVGSGRLPREKMVYMAVKDANQEDDLNCSEMTDQVYMEVIVGEEEAPAITEAQMEDSPVNKTIVPAAWATAYGSSLESKNGAATPYLQITDSISTSRALKQKIKKRRRGETRQCQTAVIIGPDGQPLTVYPCHICGKKFKSRGFLKRHMKNHPDHMFKKKYQCTDCEFTTNKKVSFHNHLESHKLIIKNEKIPEYTEYTRRYHEASPLSSNKLILRDKEPKLHKCKYCEYETAEQGLLNRHLLAVHSKNFAHVCVECAKGFRHPSELKKHMRTHTGEKPFHCQHCEFSCADQSNLKTHIKSKHGTDLPFKCGHCPQAFADDKELQRHAEIFQGHKTHQCPHCEHKSTNSSDLKRHIISVHTKDFPHKCDVCEKGFHRPSELKKHSETHKGNKVHQCRHCDFKTLDPFTLSRHILSVHTKDLPFKCKRCKRGFRHQNELKKHMKTHSGRKVYQCQYCEYNTTDASGFKRHVISIHTKDYPHRCDYCKKGFRRPSEKNQHIMRHHKETLL.

C2H2-type zinc fingers lie at residues 383 to 408 (YPCHICGKKFKSRGFLKRHMKNHPDH), 414 to 436 (YQCTDCEFTTNKKVSFHNHLESH), 476 to 499 (HKCKYCEYETAEQGLLNRHLLAVH), 505 to 527 (HVCVECAKGFRHPSELKKHMRTH), and 533 to 556 (FHCQHCEFSCADQSNLKTHIKSKH). The C2H2-type 6; atypical zinc-finger motif lies at 562–584 (FKCGHCPQAFADDKELQRHAEIF). Zn(2+) contacts are provided by Cys564, Cys567, and His580. 6 C2H2-type zinc fingers span residues 590 to 613 (HQCPHCEHKSTNSSDLKRHIISVH), 619 to 641 (HKCDVCEKGFHRPSELKKHSETH), 647 to 670 (HQCRHCDFKTLDPFTLSRHILSVH), 676 to 698 (FKCKRCKRGFRHQNELKKHMKTH), 704 to 727 (YQCQYCEYNTTDASGFKRHVISIH), and 733 to 755 (HRCDYCKKGFRRPSEKNQHIMRH).

The protein belongs to the krueppel C2H2-type zinc-finger protein family. Present in ovary and brain but not in other tissues (at protein level).

It is found in the nucleus. The protein localises to the cytoplasm. Its function is as follows. Transcription regulator required for brain development. Probably acts as a transcription factor that binds to the promoter of target genes, leading to activate their expression. The chain is Zinc finger protein 711 (znf711) from Danio rerio (Zebrafish).